The following is a 265-amino-acid chain: Hydroxyethylthiazole kinase (265 aa).

Met-55 contacts substrate. Residues Arg-130 and Ser-176 each coordinate ATP. Gly-203 provides a ligand contact to substrate.

It belongs to the Thz kinase family. Mg(2+) serves as cofactor.

The catalysed reaction is 5-(2-hydroxyethyl)-4-methylthiazole + ATP = 4-methyl-5-(2-phosphooxyethyl)-thiazole + ADP + H(+). It participates in cofactor biosynthesis; thiamine diphosphate biosynthesis; 4-methyl-5-(2-phosphoethyl)-thiazole from 5-(2-hydroxyethyl)-4-methylthiazole: step 1/1. Functionally, catalyzes the phosphorylation of the hydroxyl group of 4-methyl-5-beta-hydroxyethylthiazole (THZ). This is Hydroxyethylthiazole kinase from Leptospira interrogans serogroup Icterohaemorrhagiae serovar Lai (strain 56601).